Consider the following 340-residue polypeptide: Probable dual-specificity RNA methyltransferase RlmN (340 aa).

Glutamate 93 functions as the Proton acceptor in the catalytic mechanism. A Radical SAM core domain is found at 99 to 327 (TAKRLTVCVS…VSVRYSRGLE (229 aa)). Cysteine 106 and cysteine 332 are disulfide-bonded. Residues cysteine 113, cysteine 117, and cysteine 120 each contribute to the [4Fe-4S] cluster site. Residues 160–161 (GE), serine 190, 213–215 (SLH), and asparagine 289 contribute to the S-adenosyl-L-methionine site. Cysteine 332 (S-methylcysteine intermediate) is an active-site residue.

It belongs to the radical SAM superfamily. RlmN family. Requires [4Fe-4S] cluster as cofactor.

It is found in the cytoplasm. The catalysed reaction is adenosine(2503) in 23S rRNA + 2 reduced [2Fe-2S]-[ferredoxin] + 2 S-adenosyl-L-methionine = 2-methyladenosine(2503) in 23S rRNA + 5'-deoxyadenosine + L-methionine + 2 oxidized [2Fe-2S]-[ferredoxin] + S-adenosyl-L-homocysteine. The enzyme catalyses adenosine(37) in tRNA + 2 reduced [2Fe-2S]-[ferredoxin] + 2 S-adenosyl-L-methionine = 2-methyladenosine(37) in tRNA + 5'-deoxyadenosine + L-methionine + 2 oxidized [2Fe-2S]-[ferredoxin] + S-adenosyl-L-homocysteine. Functionally, specifically methylates position 2 of adenine 2503 in 23S rRNA and position 2 of adenine 37 in tRNAs. The chain is Probable dual-specificity RNA methyltransferase RlmN from Rippkaea orientalis (strain PCC 8801 / RF-1) (Cyanothece sp. (strain PCC 8801)).